A 425-amino-acid chain; its full sequence is Melibiose permease (425 aa).

The Cytoplasmic segment spans residues 1–13 (MNTTTCTHKDNPN). The chain crosses the membrane as a helical span at residues 14 to 34 (FWIFGLFFFLYFFIMATCFPF). Topologically, residues 35-50 (LPIWLSDIIGLNKTHT) are periplasmic. The chain crosses the membrane as a helical span at residues 51-71 (GIVFSCISLSAIAFQPVLGVI). Topologically, residues 72 to 80 (SDKLGLKKH) are cytoplasmic. The chain crosses the membrane as a helical span at residues 81–101 (LLWIISVLLFLFAPFFLYVFA). The Periplasmic segment spans residues 102–107 (PLLKTN). Residues 108–128 (IWLGALSGGLYIGFVFSAGSG) traverse the membrane as a helical segment. The Cytoplasmic portion of the chain corresponds to 129-149 (AIEAYIERVSRNSAFEYGKAR). A helical membrane pass occupies residues 150–170 (MFGCLGWGLCASTGGILFGID). A topological domain (periplasmic) is located at residue Pro-171. A helical transmembrane segment spans residues 172-192 (SYVFWMGSAAALLLMLLLVVA). Residues 193–227 (KPKPNQTAQVMNALGANQPQITAKKVFNLFRQRRM) are Cytoplasmic-facing. Residues 228 to 248 (WMFILYVIGVACVYDVFDQQF) form a helical membrane-spanning segment. At 249–267 (ATFFKTFFATPQEGTRAFG) the chain is on the periplasmic side. Residues 268–288 (FATTAGEICNAIIMFCSPWII) traverse the membrane as a helical segment. At 289–297 (NRIGAKNTL) the chain is on the cytoplasmic side. The helical transmembrane segment at 298–318 (LIAGLIMATRIIGSSFATTAV) threads the bilayer. Over 319–325 (EVIALKM) the chain is Periplasmic. Residues 326–346 (LHALEVPFLLVGAFKYITGVF) form a helical membrane-spanning segment. At 347 to 353 (DTRLSAT) the chain is on the cytoplasmic side. A helical transmembrane segment spans residues 354 to 374 (IYLIGFQFAKQSAAIFLSAFA). Topologically, residues 375–385 (GNMYDRIGFQE) are periplasmic. A helical transmembrane segment spans residues 386-406 (TYLMLGCFVLAITVVSAFTLS). Residues 407 to 425 (SRQEIAAAAGAAALTSQSR) lie on the Cytoplasmic side of the membrane.

It belongs to the major facilitator superfamily. Oligosaccharide:H(+) symporter (OHS) (TC 2.A.1.5) family.

The protein resides in the cell inner membrane. In terms of biological role, responsible for transport of melibiose into the cell, with the concomitant import of a proton (symport system). Can also transport lactose, and has weak activity with maltose. Cannot transport the analog methyl-1-thio-beta,D-galactopyranoside (TMG). This chain is Melibiose permease, found in Enterobacter cloacae subsp. cloacae (strain ATCC 13047 / DSM 30054 / NBRC 13535 / NCTC 10005 / WDCM 00083 / NCDC 279-56).